The primary structure comprises 358 residues: Peptide chain release factor 2 (358 aa).

An N5-methylglutamine modification is found at Gln242.

It belongs to the prokaryotic/mitochondrial release factor family. Post-translationally, methylated by PrmC. Methylation increases the termination efficiency of RF2.

The protein localises to the cytoplasm. Peptide chain release factor 2 directs the termination of translation in response to the peptide chain termination codons UGA and UAA. This chain is Peptide chain release factor 2 (prfB), found in Borreliella burgdorferi (strain ATCC 35210 / DSM 4680 / CIP 102532 / B31) (Borrelia burgdorferi).